The following is a 90-amino-acid chain: uncharacterized protein (90 aa).

Residue Lys88 forms an Isoglutamyl lysine isopeptide (Lys-Gln) (interchain with Q-Cter in protein Pup) linkage.

This is an uncharacterized protein from Mycolicibacterium smegmatis (strain ATCC 700084 / mc(2)155) (Mycobacterium smegmatis).